Here is a 355-residue protein sequence, read N- to C-terminus: Tyrosine recombinase XerC (355 aa).

A Core-binding (CB) domain is found at 4–89 (TQFDGDIDSF…AVRGFFAWAY (86 aa)). Positions 138–180 (DDGGAAAASGSGKAAGKTADKSADTVNRSEAPARADKRDNARV) are disordered. The segment covering 141 to 154 (GAAAASGSGKAAGK) has biased composition (low complexity). A Tyr recombinase domain is found at 158–349 (KSADTVNRSE…SIEQLKNRYG (192 aa)). The segment covering 168-178 (APARADKRDNA) has biased composition (basic and acidic residues). Residues R200, K224, H301, R304, and H327 contribute to the active site. Y336 acts as the O-(3'-phospho-DNA)-tyrosine intermediate in catalysis.

It belongs to the 'phage' integrase family. XerC subfamily. As to quaternary structure, forms a cyclic heterotetrameric complex composed of two molecules of XerC and two molecules of XerD.

The protein localises to the cytoplasm. Its function is as follows. Site-specific tyrosine recombinase, which acts by catalyzing the cutting and rejoining of the recombining DNA molecules. The XerC-XerD complex is essential to convert dimers of the bacterial chromosome into monomers to permit their segregation at cell division. It also contributes to the segregational stability of plasmids. This is Tyrosine recombinase XerC from Bifidobacterium longum subsp. infantis (strain ATCC 15697 / DSM 20088 / JCM 1222 / NCTC 11817 / S12).